We begin with the raw amino-acid sequence, 391 residues long: MATVQEIRNAQRADGPATVLAIGTATPAHSVNQADYPDYYFRITKSEHMTELKEKFKRMCDKSMIKKRYMYLTEEILKENPNMCAYMAPSLDARQDIVVVEVPKLGKEAATKAIKEWGQPKSKITHLIFCTTSGVDMPGADYQLTKLIGLRPSVKRFMMYQQGCFAGGTVLRLAKDLAENNKGARVLVVCSEITAVTFRGPADTHLDSLVGQALFGDGAAAVIVGADPDTSVERPLYQLVSTSQTILPDSDGAIDGHLREVGLTFHLLKDVPGLISKNIEKSLSEAFAPLGISDWNSIFWIAHPGGPAILDQVESKLGLKGEKLKATRQVLSEYGNMSSACVLFILDEMRKKSVEEAKATTGEGLDWGVLFGFGPGLTVETVVLHSVPIKA.

Residue Cys-164 is part of the active site.

The protein belongs to the thiolase-like superfamily. Chalcone/stilbene synthases family.

It catalyses the reaction (E)-4-coumaroyl-CoA + 3 malonyl-CoA + 3 H(+) = 2',4,4',6'-tetrahydroxychalcone + 3 CO2 + 4 CoA. It participates in secondary metabolite biosynthesis; flavonoid biosynthesis. In terms of biological role, the primary product of this enzyme is 4,2',4',6'-tetrahydroxychalcone (also termed naringenin-chalcone or chalcone) which can under specific conditions spontaneously isomerize into naringenin. The chain is Chalcone synthase 2 (CHS2) from Citrus sinensis (Sweet orange).